A 127-amino-acid polypeptide reads, in one-letter code: Fluoride-specific ion channel FluC (127 aa).

The next 4 membrane-spanning stretches (helical) occupy residues 4-24, 36-56, 68-88, and 99-119; these read SILAIALGAALGALLRWFLGL, GTLLANLVGGYAIGAAIAYFA, LIITGFCGGLTTFSTFSAEVV, and AAGAIATHVGGSLLMTLLGLF. Na(+) contacts are provided by Gly75 and Thr78.

The protein belongs to the fluoride channel Fluc/FEX (TC 1.A.43) family.

It localises to the cell inner membrane. It carries out the reaction fluoride(in) = fluoride(out). Its activity is regulated as follows. Na(+) is not transported, but it plays an essential structural role and its presence is essential for fluoride channel function. Its function is as follows. Fluoride-specific ion channel. Important for reducing fluoride concentration in the cell, thus reducing its toxicity. This is Fluoride-specific ion channel FluC from Pseudomonas paraeruginosa (strain DSM 24068 / PA7) (Pseudomonas aeruginosa (strain PA7)).